A 282-amino-acid polypeptide reads, in one-letter code: PILR alpha-associated neural protein (282 aa).

An N-terminal signal peptide occupies residues 1–31 (MESRMWPALLLSHLLPLWPLLLLPLPPPAQG). The interval 28-99 (PAQGSSSSPR…PSGFEEGPPS (72 aa)) is disordered. Over 32-178 (SSSSPRTPPA…FGGRGEGVDP (147 aa)) the chain is Extracellular. Positions 46–56 (PCARGGPSAPR) are enriched in low complexity. O-linked (GalNAc...) threonine glycosylation is present at T140. The helical transmembrane segment at 179–199 (QLYVTITISIIIVLVATGIIF) threads the bilayer. Over 200 to 282 (KFCWDRSQKR…QLNRIPLVNL (83 aa)) the chain is Cytoplasmic. Positions 209 to 282 (RRRPSGQQGA…QLNRIPLVNL (74 aa)) are disordered. The segment covering 213 to 229 (SGQQGALRQEESQQPLT) has biased composition (polar residues).

In terms of processing, O-glycosylation at Thr-140 is essential for recognition by PILRA. As to expression, mainly expressed in adult brain and cerebellum. Weaker expression in fetal brain and virtually no expression in spleen, heart, kidney, liver and dorsal ganglion relative to brain.

The protein localises to the membrane. Its function is as follows. Acts as a ligand for PILRA in neural tissues, where it may be involved in immune regulation. This chain is PILR alpha-associated neural protein (PIANP), found in Homo sapiens (Human).